Reading from the N-terminus, the 306-residue chain is Ornithine carbamoyltransferase (306 aa).

Carbamoyl phosphate is bound by residues 51 to 54 (STRT), Gln78, Arg102, and 129 to 132 (HPVQ). Residues Asn157, Asp221, and 225–226 (SM) contribute to the L-ornithine site. Residues 261 to 262 (CL) and Arg289 contribute to the carbamoyl phosphate site.

This sequence belongs to the aspartate/ornithine carbamoyltransferase superfamily. OTCase family.

Its subcellular location is the cytoplasm. The enzyme catalyses carbamoyl phosphate + L-ornithine = L-citrulline + phosphate + H(+). It participates in amino-acid biosynthesis; L-arginine biosynthesis; L-arginine from L-ornithine and carbamoyl phosphate: step 1/3. Its function is as follows. Reversibly catalyzes the transfer of the carbamoyl group from carbamoyl phosphate (CP) to the N(epsilon) atom of ornithine (ORN) to produce L-citrulline. This Campylobacter hominis (strain ATCC BAA-381 / DSM 21671 / CCUG 45161 / LMG 19568 / NCTC 13146 / CH001A) protein is Ornithine carbamoyltransferase.